The sequence spans 414 residues: Ornithine aminotransferase (414 aa).

A disulfide bridge links cysteine 154 with cysteine 163. At lysine 262 the chain carries N6-(pyridoxal phosphate)lysine.

It belongs to the class-III pyridoxal-phosphate-dependent aminotransferase family. Homodimer. Pyridoxal 5'-phosphate serves as cofactor. Post-translationally, the disulfide bond between Cys-154 and Cys-163 is reduced by TRX1 which increases OAT catalytic activity.

The protein localises to the cytoplasm. The catalysed reaction is a 2-oxocarboxylate + L-ornithine = L-glutamate 5-semialdehyde + an L-alpha-amino acid. It catalyses the reaction L-ornithine + 2-oxoglutarate = L-glutamate 5-semialdehyde + L-glutamate. The protein operates within amino-acid biosynthesis; L-proline biosynthesis; L-glutamate 5-semialdehyde from L-ornithine: step 1/1. With respect to regulation, unlike for mammalian OATs, activity is increased by TRX1-mediated reduction of the disulfide bond between Cys-154 and Cys-163. Binding to TRX1 may also induce conformational changes that facilitate substrate binding. In terms of biological role, catalyzes the transamination of alpha-ketoglutarate with ornithine or N-acetylornithine and of glutamate-5-semialdehyde with glutamate and alanine. This is Ornithine aminotransferase from Plasmodium yoelii yoelii.